The chain runs to 160 residues: Phosphopantetheine adenylyltransferase (160 aa).

Substrate is bound at residue S9. Residues 9 to 10 and H17 contribute to the ATP site; that span reads SF. Substrate contacts are provided by K41, I73, and K87. Residues 88-90, E98, and 122-128 contribute to the ATP site; these read GLR and YSFVSSS.

This sequence belongs to the bacterial CoaD family. Homohexamer. Mg(2+) is required as a cofactor.

The protein resides in the cytoplasm. The catalysed reaction is (R)-4'-phosphopantetheine + ATP + H(+) = 3'-dephospho-CoA + diphosphate. It functions in the pathway cofactor biosynthesis; coenzyme A biosynthesis; CoA from (R)-pantothenate: step 4/5. Reversibly transfers an adenylyl group from ATP to 4'-phosphopantetheine, yielding dephospho-CoA (dPCoA) and pyrophosphate. This Mycolicibacterium gilvum (strain PYR-GCK) (Mycobacterium gilvum (strain PYR-GCK)) protein is Phosphopantetheine adenylyltransferase.